A 460-amino-acid chain; its full sequence is Kynureninase (460 aa).

Pyridoxal 5'-phosphate contacts are provided by residues leucine 127, threonine 128, 165–168, aspartate 249, histidine 252, and tyrosine 274; that span reads FPSD. Lysine 275 carries the post-translational modification N6-(pyridoxal phosphate)lysine. Tryptophan 304 and asparagine 332 together coordinate pyridoxal 5'-phosphate.

It belongs to the kynureninase family. In terms of assembly, homodimer. It depends on pyridoxal 5'-phosphate as a cofactor.

The protein resides in the cytoplasm. The enzyme catalyses L-kynurenine + H2O = anthranilate + L-alanine + H(+). It carries out the reaction 3-hydroxy-L-kynurenine + H2O = 3-hydroxyanthranilate + L-alanine + H(+). It functions in the pathway amino-acid degradation; L-kynurenine degradation; L-alanine and anthranilate from L-kynurenine: step 1/1. It participates in cofactor biosynthesis; NAD(+) biosynthesis; quinolinate from L-kynurenine: step 2/3. Its function is as follows. Catalyzes the cleavage of L-kynurenine (L-Kyn) and L-3-hydroxykynurenine (L-3OHKyn) into anthranilic acid (AA) and 3-hydroxyanthranilic acid (3-OHAA), respectively. The chain is Kynureninase from Monosiga brevicollis (Choanoflagellate).